Here is a 630-residue protein sequence, read N- to C-terminus: MVNDKILYDSCKTFNIDASSAQSLIESGANPLYEYDGETPLKAYVTKKNNNIKNDVVILLLSSVDYKNINDFDIFEYLCSDNIDIDLLKLLISKGIEINSIKNGINIVEKYATTSNPNIDVFKLLLDKGIPTCSNIQYGYNIIPIQCTDYIYFNWDDEFDYLDYDYTTDYDNRMGKTVLYYYIITRSQDGYVTSLDVINYLISHENEMCHYTYRERTILYYYVDKCDIKREIFDVLFDSNYSGNELMHILSIYLRKQYRKKNHKIDNYIVDKLLSAHDTFYILELCNSLRNNVIISSILKRYTDSIQDLLSEYVSYHTVYINVIKCMIREGAILYRFKHINKYFKRFDNRDPKVVEYILKNGNVVVNDDNIINIMPLFPTLFIHESEVLSILEICKPYIDDINKIDKHGRSILYYCIESHSVALIEWLIDNGADINITTTYGSTCIGICVIMAHACIPEIAEIYIKILEIILSKLPTIECIKKTVDYLSNDRHLLIGNKAKSLLKICIKYFILVDYKYICDTYPSYIEYITDCEKEIADMCQIKINGTDMLTVMYKLNKPTKKRYVNNPIFTDWANKQYKFYNQIIYNANRLIEQSKKIDNMIDEVSADNNRLSTLPLELRHLIFSYAFL.

ANK repeat units lie at residues 36-69 (DGET…YKNI), 70-100 (NDFD…EINS), 103-134 (NGIN…PTCS), 174-210 (MGKT…EMCH), 338-367 (KHIN…VVVN), and 408-437 (HGRS…DINI).

It belongs to the orthopoxvirus OPG025 family. As to quaternary structure, interacts with components of host SCF complex CUL1 and SKP1 and components of the cullin deneddylation/COP9 signalosome complex subunits COPS7A and COPS7B.

Plays a role in the inhibition of host immune repsonse by counteracting the action of interferons on early events in the viral replication cycle. The polypeptide is Ankyrin repeat protein OPG025 (OPG025) (Monkeypox virus).